A 465-amino-acid polypeptide reads, in one-letter code: Sensor histidine kinase ZraS (465 aa).

Topologically, residues 1 to 14 are cytoplasmic; the sequence is MSFIRLHKDAAATW. The chain crosses the membrane as a helical span at residues 15 to 35; that stretch reads LSRLLPAAIFILVGLFSIMVI. Over 36–202 the chain is Periplasmic; sequence RDYGRESAAA…AATQAREWRN (167 aa). A helical membrane pass occupies residues 203-223; it reads TLIVLSALAAVLLATLLAFFW. Topologically, residues 224–465 are cytoplasmic; it reads HQRYQRSHRE…WLPVIARQQD (242 aa). Residues 253–461 form the Histidine kinase domain; the sequence is GVAHEIRNPL…VFTIWLPVIA (209 aa). H256 carries the post-translational modification Phosphohistidine; by autocatalysis.

In terms of processing, autophosphorylated.

The protein localises to the cell inner membrane. It carries out the reaction ATP + protein L-histidine = ADP + protein N-phospho-L-histidine.. Its activity is regulated as follows. Activity of the ZraS/ZraR two-component system is repressed by the zinc-bound form of ZraP, which probably interacts with the periplasmic region of ZraS. In terms of biological role, part of the Zra signaling pathway, an envelope stress response (ESR) system composed of the periplasmic accessory protein ZraP, the histidine kinase ZraS and the transcriptional regulator ZraR. The ZraPSR system contributes to antibiotic resistance and is important for membrane integrity in the presence of membrane-targeting biocides. ZraS is a member of the two-component regulatory system ZraS/ZraR. Functions as a membrane-associated sensor kinase that phosphorylates ZraR in response to high concentrations of Zn(2+) or Pb(2+) in the medium. This chain is Sensor histidine kinase ZraS, found in Salmonella typhimurium (strain LT2 / SGSC1412 / ATCC 700720).